Reading from the N-terminus, the 563-residue chain is Cytochrome P450 monooxygenase phqL (563 aa).

The next 3 membrane-spanning stretches (helical) occupy residues 20–40, 52–72, and 80–100; these read ENFS…IIIF, IPVG…FVPG, and ALWL…VSIL. Asn-279 is a glycosylation site (N-linked (GlcNAc...) asparagine). Residues 362–382 traverse the membrane as a helical segment; sequence LVIFAGSGTVAVTIIGCLYFL. Residue Asn-419 is glycosylated (N-linked (GlcNAc...) asparagine). Cys-502 contacts heme.

This sequence belongs to the cytochrome P450 family. Requires heme as cofactor.

Its subcellular location is the membrane. Its pathway is alkaloid biosynthesis. Functionally, cytochrome P450 monooxygenase; part of the gene cluster that mediates the biosynthesis of paraherquamide, a fungal indole alkaloid that belongs to a family of natural products containing a characteristic bicyclo[2.2.2]diazaoctane core. The first steps in the biosynthesis of paraherquamide is the production of the beta-methyl-proline precursor from L-isoleucine. They require oxidation of a terminally hydroxylated L-isoleucine to the corresponding aldehyde by enzymes which have still to be identified. Spontaneous cyclization and dehydration would yield the 4-methyl pyrolline-5-carboxylic acid, which is then reduced by the pyrroline-5-carboxylate reductase phqD leading to the beta-methyl-proline precursor. The next step of paraherquamide biosynthesis involves coupling of beta-methyl-proline and L-tryptophan by the bimodular NRPS phqB, to produce a monooxopiperazine intermediate. The reductase (R) domain of phqB utilizes NADPH for hydride transfer to reduce the thioester bond of the T domain-tethered linear dipeptide to a hemithioaminal intermediate, which spontaneously cleaves the C-S bond to release the aldehyde product. This compound undergoes spontaneous cyclization and dehydration to give a dienamine which is reverse prenylated at C-2 by the reverse prenyltransferase phqJ. The other prenyltransferase present in the cluster, phqI may be a redundant gene in the pathway. During biosynthetic assembly, the key step to produce the polycyclic core is catalyzed by the bifunctional reductase and intramolecular [4+2] Diels-Alderase, phqE, resulting in formation of the [2.2.2] diazaoctane intermediate preparaherquamide. Following formation of preparaherquamide, an indole 2,3-epoxidation-initiated pinacol-like rearrangement is catalyzed by the phqK FAD-dependent monooxygenase. The prenyltransferase phqA, the cytochrome P450 monooxygenase phqL, and the FAD-linked oxidoreductase phqH (or the cytochrome P450 monooxygenase phqM), are proposed to be involved in the formation of the pyran ring. The FAD-dependent monooxygenase phqK is likely responsible for generation of the spiro-oxindole, and the N-methylation is likely mediated by the phqN methyltransferase leading to the isolable natural product paraherquamide F. However, the order of these biosynthetic steps has still to be determined. In late-stage paraherquamide biosynthesis, the third P450 monooxygenase, phqO, is probably responsible for the C-14 hydroxylation, transforming paraherquamide F to paraherquamide G, and paraherquamide E to the final product paraherquamide A. The expansion from the 6-membered ring pyran (in paraherquamides F and G) to the 7-membered dioxepin ring (in paraherquamides A and E) represents a poorly understood but intriguing process that probably involves the 2-oxoglutarate-dependent dioxygenase phqC. Finally, the remaining members of the paraherquamide cluster, including phqI as well as phqM (or phqH), do not have a clearly prescribed role and appear to be redundant. This is Cytochrome P450 monooxygenase phqL from Penicillium fellutanum.